Reading from the N-terminus, the 420-residue chain is Corticotropin-releasing factor receptor 1 (420 aa).

The first 28 residues, 1 to 28 (MVPGPRPALLLLLFLLQAFLLWDSPVAA), serve as a signal peptide directing secretion. At 29-116 (SIQEQYCESL…CQEILSEEKR (88 aa)) the chain is on the extracellular side. Disulfide bonds link Cys-35–Cys-59, Cys-49–Cys-92, and Cys-73–Cys-107. 5 N-linked (GlcNAc...) asparagine glycosylation sites follow: Asn-43, Asn-50, Asn-83, Asn-95, and Asn-103. Residues 117 to 147 (SKLHYHIAVIINYLGHCVSLGTLLVAFVLFM) form a helical membrane-spanning segment. The Cytoplasmic portion of the chain corresponds to 148 to 154 (RLRSIRC). The helical transmembrane segment at 155–179 (LRNIIHWNLITAFILRNATWFVVQL) threads the bilayer. Residues 180–194 (TMNPEVHESNVVWCR) lie on the Extracellular side of the membrane. A disulfide bridge connects residues Cys-193 and Cys-263. Residues 195–223 (LVTAAYNYFHVTNFFWMFGEGCYLHTAIV) form a helical membrane-spanning segment. Over 224-230 (LTYSTDK) the chain is Cytoplasmic. A helical transmembrane segment spans residues 231 to 258 (LRKWMFICIGWCIPFPIIVAWAIGKLYY). Over 259 to 274 (DNEKCWFGKRAGVYTD) the chain is Extracellular. Residues 275–300 (YIYQGPMILVLLINFIFLFNIVRILM) form a helical membrane-spanning segment. Over 301 to 311 (TKLRASTTSET) the chain is Cytoplasmic. Residues 312 to 336 (IQYRKAVKATLVLLSLLGITYMLFF) form a helical membrane-spanning segment. Topologically, residues 337 to 343 (VNPGEDE) are extracellular. A helical transmembrane segment spans residues 344 to 373 (ISRIVFIYFNSFLESFQGFFVSVFYCFLNS). Over 374–420 (EVRSAVRKRWHRWQDKHSIRARVARAMSIPTSPTRVSFHSIKQSSAV) the chain is Cytoplasmic.

Belongs to the G-protein coupled receptor 2 family. Interacts (via N-terminal extracellular domain) with CRF and UCN.

It localises to the cell membrane. G-protein coupled receptor for CRH (corticotropin-releasing factor) and UCN (urocortin). Has high affinity for CRH and UCN. Ligand binding causes a conformation change that triggers signaling via guanine nucleotide-binding proteins (G proteins) and down-stream effectors, such as adenylate cyclase. Promotes the activation of adenylate cyclase, leading to increased intracellular cAMP levels. In Gallus gallus (Chicken), this protein is Corticotropin-releasing factor receptor 1 (CRHR1).